The primary structure comprises 186 residues: UPF0340 protein M6_Spy1622 (186 aa).

Belongs to the UPF0340 family.

The chain is UPF0340 protein M6_Spy1622 from Streptococcus pyogenes serotype M6 (strain ATCC BAA-946 / MGAS10394).